The primary structure comprises 690 residues: BURP domain-containing protein 14 (690 aa).

The first 26 residues, 1–26, serve as a signal peptide directing secretion; the sequence is MAPPRHARLVAATIAVLLCHLPRSAA. The disordered stretch occupies residues 134–163; sequence GSSWSKSSSDGDGAAAAAAPAGGGGGGGGG. Residues 135–153 are compositionally biased toward low complexity; that stretch reads SSWSKSSSDGDGAAAAAAP. Residues 154 to 163 are compositionally biased toward gly residues; the sequence is AGGGGGGGGG. The N-linked (GlcNAc...) asparagine glycan is linked to asparagine 178. The segment covering 201 to 211 has biased composition (gly residues); sequence SNGGGGGGGGV. Positions 201 to 232 are disordered; it reads SNGGGGGGGGVDSFRRYGKGSQGRNDSFTSYE. N-linked (GlcNAc...) asparagine glycosylation is found at asparagine 225, asparagine 317, asparagine 379, asparagine 432, asparagine 450, and asparagine 601. Positions 477–689 constitute a BURP domain; it reads FFRERDLVAG…FQGDMTWTVA (213 aa).

Expressed in panicles.

This chain is BURP domain-containing protein 14 (BURP14), found in Oryza sativa subsp. japonica (Rice).